A 403-amino-acid polypeptide reads, in one-letter code: F-box/kelch-repeat protein At5g43190 (403 aa).

The F-box domain maps to 45–91; that stretch reads PNIWSNLPNHLLEHILSLLPFKTLLTLRSISRHLRSLILSPSFISDH. Kelch repeat units lie at residues 91 to 140, 192 to 240, 291 to 339, and 343 to 393; these read HSFS…LLSS, KIFT…VFYN, ILYM…VCYH, and HVYC…FRWF.

In Arabidopsis thaliana (Mouse-ear cress), this protein is F-box/kelch-repeat protein At5g43190.